Here is a 227-residue protein sequence, read N- to C-terminus: Lipoprotein-releasing system ATP-binding protein LolD (227 aa).

Positions 6–227 (LTSQKLYKSY…LHEGSLYARE (222 aa)) constitute an ABC transporter domain. Residue 42 to 49 (GPSGSGKS) coordinates ATP.

It belongs to the ABC transporter superfamily. Lipoprotein translocase (TC 3.A.1.125) family. In terms of assembly, the complex is composed of two ATP-binding proteins (LolD) and two transmembrane proteins (LolC and LolE).

The protein localises to the cell inner membrane. Its function is as follows. Part of the ABC transporter complex LolCDE involved in the translocation of mature outer membrane-directed lipoproteins, from the inner membrane to the periplasmic chaperone, LolA. Responsible for the formation of the LolA-lipoprotein complex in an ATP-dependent manner. This is Lipoprotein-releasing system ATP-binding protein LolD from Legionella pneumophila (strain Lens).